The following is a 485-amino-acid chain: Glutamyl-tRNA(Gln) amidotransferase subunit A (485 aa).

Active-site charge relay system residues include lysine 76 and serine 151. The Acyl-ester intermediate role is filled by serine 175.

It belongs to the amidase family. GatA subfamily. As to quaternary structure, heterotrimer of A, B and C subunits.

The catalysed reaction is L-glutamyl-tRNA(Gln) + L-glutamine + ATP + H2O = L-glutaminyl-tRNA(Gln) + L-glutamate + ADP + phosphate + H(+). Its function is as follows. Allows the formation of correctly charged Gln-tRNA(Gln) through the transamidation of misacylated Glu-tRNA(Gln) in organisms which lack glutaminyl-tRNA synthetase. The reaction takes place in the presence of glutamine and ATP through an activated gamma-phospho-Glu-tRNA(Gln). The polypeptide is Glutamyl-tRNA(Gln) amidotransferase subunit A (Pelagibacter ubique (strain HTCC1062)).